A 549-amino-acid chain; its full sequence is Oxygen-dependent choline dehydrogenase (549 aa).

Asp4–Glu33 contributes to the FAD binding site. His465 acts as the Proton acceptor in catalysis.

This sequence belongs to the GMC oxidoreductase family. FAD serves as cofactor.

The catalysed reaction is choline + A = betaine aldehyde + AH2. The enzyme catalyses betaine aldehyde + NAD(+) + H2O = glycine betaine + NADH + 2 H(+). The protein operates within amine and polyamine biosynthesis; betaine biosynthesis via choline pathway; betaine aldehyde from choline (cytochrome c reductase route): step 1/1. Involved in the biosynthesis of the osmoprotectant glycine betaine. Catalyzes the oxidation of choline to betaine aldehyde and betaine aldehyde to glycine betaine at the same rate. This chain is Oxygen-dependent choline dehydrogenase, found in Rhizobium etli (strain CIAT 652).